Here is a 399-residue protein sequence, read N- to C-terminus: S-adenosylmethionine synthase (399 aa).

H17 contacts ATP. D19 is a binding site for Mg(2+). Residue E45 participates in K(+) binding. The L-methionine site is built by E58 and Q101. The tract at residues 101–111 (QSPDIAQGVDK) is flexible loop. ATP-binding positions include 176–178 (DGK), 243–244 (RF), D252, 258–259 (RK), and K279. D252 contacts L-methionine. K283 serves as a coordination point for L-methionine.

The protein belongs to the AdoMet synthase family. As to quaternary structure, homotetramer; dimer of dimers. Requires Mg(2+) as cofactor. K(+) serves as cofactor.

It localises to the cytoplasm. The enzyme catalyses L-methionine + ATP + H2O = S-adenosyl-L-methionine + phosphate + diphosphate. It functions in the pathway amino-acid biosynthesis; S-adenosyl-L-methionine biosynthesis; S-adenosyl-L-methionine from L-methionine: step 1/1. In terms of biological role, catalyzes the formation of S-adenosylmethionine (AdoMet) from methionine and ATP. The overall synthetic reaction is composed of two sequential steps, AdoMet formation and the subsequent tripolyphosphate hydrolysis which occurs prior to release of AdoMet from the enzyme. This chain is S-adenosylmethionine synthase, found in Staphylococcus epidermidis (strain ATCC 35984 / DSM 28319 / BCRC 17069 / CCUG 31568 / BM 3577 / RP62A).